The following is a 361-amino-acid chain: Uroporphyrinogen decarboxylase (361 aa).

Substrate-binding positions include 27–31 (RQAGR), Asp-77, Tyr-154, Thr-209, and His-327.

It belongs to the uroporphyrinogen decarboxylase family. Homodimer.

It localises to the cytoplasm. It carries out the reaction uroporphyrinogen III + 4 H(+) = coproporphyrinogen III + 4 CO2. It functions in the pathway porphyrin-containing compound metabolism; protoporphyrin-IX biosynthesis; coproporphyrinogen-III from 5-aminolevulinate: step 4/4. Catalyzes the decarboxylation of four acetate groups of uroporphyrinogen-III to yield coproporphyrinogen-III. The sequence is that of Uroporphyrinogen decarboxylase from Coxiella burnetii (strain Dugway 5J108-111).